The sequence spans 121 residues: Small ribosomal subunit protein uS13 (121 aa).

The disordered stretch occupies residues arginine 98–lysine 121. A compositionally biased stretch (basic residues) spans valine 109–lysine 121.

It belongs to the universal ribosomal protein uS13 family. In terms of assembly, part of the 30S ribosomal subunit. Forms a loose heterodimer with protein S19. Forms two bridges to the 50S subunit in the 70S ribosome.

Its function is as follows. Located at the top of the head of the 30S subunit, it contacts several helices of the 16S rRNA. In the 70S ribosome it contacts the 23S rRNA (bridge B1a) and protein L5 of the 50S subunit (bridge B1b), connecting the 2 subunits; these bridges are implicated in subunit movement. Contacts the tRNAs in the A and P-sites. This Phytoplasma australiense protein is Small ribosomal subunit protein uS13.